Reading from the N-terminus, the 86-residue chain is Large ribosomal subunit protein bL31B (86 aa).

It belongs to the bacterial ribosomal protein bL31 family. Type B subfamily. As to quaternary structure, part of the 50S ribosomal subunit.

The chain is Large ribosomal subunit protein bL31B from Yersinia enterocolitica serotype O:8 / biotype 1B (strain NCTC 13174 / 8081).